A 268-amino-acid chain; its full sequence is Thymidylate synthase (268 aa).

DUMP is bound by residues Arg-26 and 131 to 132; that span reads RR. Cys-151 functions as the Nucleophile in the catalytic mechanism. DUMP is bound by residues 171–174, Asn-182, and 212–214; these read RSAD and HIY. Asp-174 is a (6R)-5,10-methylene-5,6,7,8-tetrahydrofolate binding site. Ser-267 serves as a coordination point for (6R)-5,10-methylene-5,6,7,8-tetrahydrofolate.

It belongs to the thymidylate synthase family. Bacterial-type ThyA subfamily. In terms of assembly, homodimer.

The protein resides in the cytoplasm. It carries out the reaction dUMP + (6R)-5,10-methylene-5,6,7,8-tetrahydrofolate = 7,8-dihydrofolate + dTMP. It participates in pyrimidine metabolism; dTTP biosynthesis. In terms of biological role, catalyzes the reductive methylation of 2'-deoxyuridine-5'-monophosphate (dUMP) to 2'-deoxythymidine-5'-monophosphate (dTMP) while utilizing 5,10-methylenetetrahydrofolate (mTHF) as the methyl donor and reductant in the reaction, yielding dihydrofolate (DHF) as a by-product. This enzymatic reaction provides an intracellular de novo source of dTMP, an essential precursor for DNA biosynthesis. This chain is Thymidylate synthase, found in Corynebacterium aurimucosum (strain ATCC 700975 / DSM 44827 / CIP 107346 / CN-1) (Corynebacterium nigricans).